A 451-amino-acid chain; its full sequence is Glutamyl-tRNA(Gln) amidotransferase subunit D (451 aa).

Residues 78-97 form a disordered region; it reads PREAPTPGEEEGSQEDFGQP. The 334-residue stretch at 99 to 432 folds into the Asparaginase/glutaminase domain; that stretch reads PRVFFVGTGG…EEIQRLFTAN (334 aa). Active-site residues include T109, T187, D188, and K266.

It belongs to the asparaginase 1 family. GatD subfamily. In terms of assembly, heterodimer of GatD and GatE.

The enzyme catalyses L-glutamyl-tRNA(Gln) + L-glutamine + ATP + H2O = L-glutaminyl-tRNA(Gln) + L-glutamate + ADP + phosphate + H(+). Its function is as follows. Allows the formation of correctly charged Gln-tRNA(Gln) through the transamidation of misacylated Glu-tRNA(Gln) in organisms which lack glutaminyl-tRNA synthetase. The reaction takes place in the presence of glutamine and ATP through an activated gamma-phospho-Glu-tRNA(Gln). The GatDE system is specific for glutamate and does not act on aspartate. The protein is Glutamyl-tRNA(Gln) amidotransferase subunit D of Thermofilum pendens (strain DSM 2475 / Hrk 5).